A 129-amino-acid chain; its full sequence is Glycine cleavage system H protein (129 aa).

The Lipoyl-binding domain maps to 23–104 (TVTVGITQHA…SYSAWLFKLK (82 aa)). Lys-64 is modified (N6-lipoyllysine).

Belongs to the GcvH family. The glycine cleavage system is composed of four proteins: P, T, L and H. (R)-lipoate is required as a cofactor.

In terms of biological role, the glycine cleavage system catalyzes the degradation of glycine. The H protein shuttles the methylamine group of glycine from the P protein to the T protein. In Nitrosomonas eutropha (strain DSM 101675 / C91 / Nm57), this protein is Glycine cleavage system H protein.